We begin with the raw amino-acid sequence, 281 residues long: Inositol diphosphatase SIW14 (281 aa).

Positions 1-20 are disordered; the sequence is MGLYQAKNDEGSDPKSSSKI. The span at 7-20 shows a compositional bias: basic and acidic residues; sequence KNDEGSDPKSSSKI. Position 94 is a phosphoserine (Ser94). The Tyrosine-protein phosphatase domain maps to 121–271; that stretch reads NFSHVVGEIY…YDDDEIKRIA (151 aa). Residues Asn189, Ile190, and His193 each coordinate 1D-myo-inositol hexakisphosphate. Catalysis depends on Cys214, which acts as the Phosphocysteine intermediate.

The protein belongs to the protein-tyrosine phosphatase family. Atypical dual-specificity phosphatase Siw14-like subfamily. Monomer.

It is found in the cytoplasm. The catalysed reaction is 5-diphospho-1D-myo-inositol 1,2,3,4,6-pentakisphosphate + H2O = 1D-myo-inositol hexakisphosphate + phosphate + H(+). It carries out the reaction 5-diphospho-1D-myo-inositol 1,3,4,6-tetrakisphosphate + H2O = 1D-myo-inositol 1,3,4,5,6-pentakisphosphate + phosphate + H(+). The enzyme catalyses 3,5-bis(diphospho)-1D-myo-inositol 1,2,4,6-tetrakisphosphate + H2O = 3-diphospho-1D-myo-inositol 1,2,4,5,6-pentakisphosphate + phosphate + 2 H(+). It catalyses the reaction 1,5-bis(diphospho)-1D-myo-inositol 2,3,4,6-tetrakisphosphate + H2O = 1-diphospho-1D-myo-inositol 2,3,4,5,6-pentakisphosphate + phosphate + 2 H(+). The catalysed reaction is 6-diphospho-1D-myo-inositol pentakisphosphate + H2O = 1D-myo-inositol hexakisphosphate + phosphate + H(+). Its function is as follows. Selectively cleaves the beta-phosphate at the 5-position of soluble inositol pyrophosphates. Converts 5-diphosphoinositol tetrakisphosphate (5-PP-InsP(4)) into inositol pentakisphosphate (InsP(5)), 5-diphosphoinositol pentakisphosphate (5-PP-IP(5) or 5-InsP(7)) into inositol hexakisphosphate (IP(6) or InsP(6)), and 1,5-bisdiphosphoinositol tetrakisphosphate (1,5-PP-IP(5) or InsP(8)) into 1-diphosphoinositol pentakisphosphate (1-PP-IP(5) or 1-InsP(7)). Also has activity on 1,5-bis-diphosphoinositol 2,3,4,6-tetrakisphosphate (1,5-InsP(8)) and 3,5-InsP(8). Modulates inositol pyrophosphate metabolism that may have an influence in stress response. Plays a role in actin filament organization and endocytosis. Functions as a prion suppressing factor possibly due to its phosphatase activity against inositol pyrophosphates, which are signal transduction molecules involved in prion propagation. This is Inositol diphosphatase SIW14 (SIW14) from Saccharomyces cerevisiae (strain ATCC 204508 / S288c) (Baker's yeast).